We begin with the raw amino-acid sequence, 436 residues long: UBX domain-containing protein 7 (436 aa).

A Glycyl lysine isopeptide (Lys-Gly) (interchain with G-Cter in ubiquitin) cross-link involves residue Lys-19. The segment at 115 to 141 is disordered; that stretch reads AGESSSRETNPGLAREEKSSRDVHRKN. Residues 212-290 enclose the UBX domain; sequence LHSSKCVLQI…ELTPRSALLL (79 aa). Basic and acidic residues predominate over residues 325 to 346; sequence DKDPEVTSQREETSKPNRHEVR. Disordered regions lie at residues 325 to 357 and 371 to 436; these read DKDPEVTSQREETSKPNRHEVRSSTPLSGAASS and SSAH…EDKK. A compositionally biased stretch (low complexity) spans 347 to 357; that stretch reads SSTPLSGAASS. The segment covering 371–408 has biased composition (polar residues); the sequence is SSAHASPMLTPSGTRYPSETNLTTSRSVSPNVFQFVNN. Ser-388 carries the post-translational modification Phosphoserine. The span at 426-436 shows a compositional bias: basic and acidic residues; that stretch reads HLEKKKDEDKK.

In terms of assembly, interacts with CDC48.

It is found in the endoplasmic reticulum. Functionally, involved in CDC48-dependent protein degradation through the ubiquitin/proteasome pathway. The chain is UBX domain-containing protein 7 (UBX7) from Saccharomyces cerevisiae (strain ATCC 204508 / S288c) (Baker's yeast).